Consider the following 953-residue polypeptide: Isoleucine--tRNA ligase (953 aa).

The 'HIGH' region motif lies at 57-67; the sequence is PYANGDIHIGH. Glu582 contributes to the L-isoleucyl-5'-AMP binding site. The 'KMSKS' region motif lies at 623–627; the sequence is KMSKS. Position 626 (Lys626) interacts with ATP. Zn(2+)-binding residues include Cys916, Cys919, Cys936, and Cys939.

Belongs to the class-I aminoacyl-tRNA synthetase family. IleS type 1 subfamily. As to quaternary structure, monomer. The cofactor is Zn(2+).

It localises to the cytoplasm. The enzyme catalyses tRNA(Ile) + L-isoleucine + ATP = L-isoleucyl-tRNA(Ile) + AMP + diphosphate. Catalyzes the attachment of isoleucine to tRNA(Ile). As IleRS can inadvertently accommodate and process structurally similar amino acids such as valine, to avoid such errors it has two additional distinct tRNA(Ile)-dependent editing activities. One activity is designated as 'pretransfer' editing and involves the hydrolysis of activated Val-AMP. The other activity is designated 'posttransfer' editing and involves deacylation of mischarged Val-tRNA(Ile). The protein is Isoleucine--tRNA ligase of Bordetella parapertussis (strain 12822 / ATCC BAA-587 / NCTC 13253).